The sequence spans 478 residues: MAKPACVFLPPAFLEATRAIMPADLSMDDFIAACQRPLRRSLRVNTLKISVTDFLTLVQDYDWRLEPIPWCAEGFWIERGDEELRLGSAAEHLSGLFYIQEASSMLPVSALFAGAEAPSRVLDVAAAPGSKTTQIAALMNNQGGIVANEYSASRVKVLHANISRCGVKNVALTHFDGRVFGAALPESFDAILLDAPCSGEGVVRKDPDAMSNWSPESVTAIADTQRELIDSAFHALAPGGVMVYSTCTLNAQENQQIVNGLLATYGDAVSIEPLGDLFPGAKQALTAEGFLHVFPQIYDSEGFFVARLRKHHSVPPLAKPSYKLGKFPFTPLSGKDSAEIAQAAAASGLAWDKTSRLWARDKEIWLFPAELEALVNKIRFSRIGLKLAERFTKGYRWQHEAVIALAVADGKQRFELDATLAQEWFHGRDLYPEPPPQTDECIVTYQQQPLGIAKRIGSRIKNNLPRELVRDGVLDFHQ.

Residues 125–131 (AAAPGSK), E149, D176, and D194 contribute to the S-adenosyl-L-methionine site. C247 functions as the Nucleophile in the catalytic mechanism.

It belongs to the class I-like SAM-binding methyltransferase superfamily. RsmB/NOP family.

The protein resides in the cytoplasm. The enzyme catalyses cytidine(1407) in 16S rRNA + S-adenosyl-L-methionine = 5-methylcytidine(1407) in 16S rRNA + S-adenosyl-L-homocysteine + H(+). Functionally, specifically methylates the cytosine at position 1407 (m5C1407) of 16S rRNA. The protein is Ribosomal RNA small subunit methyltransferase F of Serratia proteamaculans (strain 568).